A 349-amino-acid polypeptide reads, in one-letter code: Dihydroorotate dehydrogenase (quinone) (349 aa).

FMN contacts are provided by residues 65–69 (AGFDK) and Ala89. Lys69 lines the substrate pocket. 114 to 118 (NRMGF) contributes to the substrate binding site. FMN is bound by residues Asn143 and Asn176. Asn176 serves as a coordination point for substrate. The active-site Nucleophile is Ser179. Substrate is bound at residue Asn181. Lys212 and Thr240 together coordinate FMN. 241 to 242 (NT) is a binding site for substrate. The disordered stretch occupies residues 244 to 265 (TERPESLSHPHAGEQGGLSGAP). Over residues 245-255 (ERPESLSHPHA) the composition is skewed to basic and acidic residues. FMN-binding positions include Gly263, Gly290, and 311-312 (YT).

It belongs to the dihydroorotate dehydrogenase family. Type 2 subfamily. In terms of assembly, monomer. The cofactor is FMN.

It localises to the cell membrane. It catalyses the reaction (S)-dihydroorotate + a quinone = orotate + a quinol. The protein operates within pyrimidine metabolism; UMP biosynthesis via de novo pathway; orotate from (S)-dihydroorotate (quinone route): step 1/1. In terms of biological role, catalyzes the conversion of dihydroorotate to orotate with quinone as electron acceptor. The chain is Dihydroorotate dehydrogenase (quinone) from Halobacterium salinarum (strain ATCC 29341 / DSM 671 / R1).